The sequence spans 488 residues: Transmembrane protein 39A (488 aa).

Residues asparagine 31 and asparagine 39 are each glycosylated (N-linked (GlcNAc...) asparagine). The next 3 helical transmembrane spans lie at 72–92, 110–130, and 155–175; these read GLLF…IQYI, TSLN…VMLA, and LITA…WTLV. N-linked (GlcNAc...) asparagine glycosylation is present at asparagine 180. 5 consecutive transmembrane segments (helical) span residues 182–202, 287–307, 319–339, 420–440, and 446–466; these read SVLN…LCCF, EVLF…LCFV, CEHL…QLLP, LLNL…YSLL, and NHTL…FKLL.

The protein belongs to the TMEM39 family.

The protein resides in the endoplasmic reticulum membrane. Regulates autophagy by controlling the spatial distribution and levels of the intracellular phosphatidylinositol 4-phosphate (PtdIns(4)P) pools. Modulates (PtdIns(4)P) levels by regulating the ER-to-Golgi trafficking of the phosphatidylinositide phosphatase SACM1L. This is Transmembrane protein 39A (tmem39a) from Xenopus tropicalis (Western clawed frog).